Consider the following 218-residue polypeptide: NAD(P)H-hydrate epimerase (218 aa).

The 207-residue stretch at 9 to 215 (MKKIDQYAID…DIGIPQKAIR (207 aa)) folds into the YjeF N-terminal domain. Position 55–59 (55–59 (NNGAD)) interacts with (6S)-NADPHX. K(+) contacts are provided by N56 and D127. (6S)-NADPHX is bound by residues 131–137 (GTGLNRT) and D160. S163 serves as a coordination point for K(+).

This sequence belongs to the NnrE/AIBP family. It depends on K(+) as a cofactor.

The enzyme catalyses (6R)-NADHX = (6S)-NADHX. It carries out the reaction (6R)-NADPHX = (6S)-NADPHX. In terms of biological role, catalyzes the epimerization of the S- and R-forms of NAD(P)HX, a damaged form of NAD(P)H that is a result of enzymatic or heat-dependent hydration. This is a prerequisite for the S-specific NAD(P)H-hydrate dehydratase to allow the repair of both epimers of NAD(P)HX. The polypeptide is NAD(P)H-hydrate epimerase (Anaerococcus prevotii (strain ATCC 9321 / DSM 20548 / JCM 6508 / NCTC 11806 / PC1) (Peptostreptococcus prevotii)).